The following is a 564-amino-acid chain: Quinone-dependent D-lactate dehydrogenase (564 aa).

Positions 36-207 (GTGNALAVVR…TNLQEKRYQV (172 aa)) constitute an FAD-binding PCMH-type domain. Residues 70–74 (AANTG), 78–79 (GS), G137, S144, G154, and V256 each bind FAD.

Belongs to the quinone-dependent D-lactate dehydrogenase family. It depends on FAD as a cofactor.

It is found in the cell inner membrane. The catalysed reaction is (R)-lactate + a quinone = a quinol + pyruvate. Catalyzes the oxidation of D-lactate to pyruvate. The protein is Quinone-dependent D-lactate dehydrogenase of Haemophilus influenzae (strain ATCC 51907 / DSM 11121 / KW20 / Rd).